The primary structure comprises 302 residues: UDP-N-acetylenolpyruvoylglucosamine reductase (302 aa).

An FAD-binding PCMH-type domain is found at 23–188 (KVGGNAEIFF…LKAVFKVNKG (166 aa)). Residue Arg-168 is part of the active site. Ser-217 serves as the catalytic Proton donor. Glu-287 is a catalytic residue.

This sequence belongs to the MurB family. Requires FAD as cofactor.

It is found in the cytoplasm. The catalysed reaction is UDP-N-acetyl-alpha-D-muramate + NADP(+) = UDP-N-acetyl-3-O-(1-carboxyvinyl)-alpha-D-glucosamine + NADPH + H(+). The protein operates within cell wall biogenesis; peptidoglycan biosynthesis. Cell wall formation. In Rickettsia bellii (strain RML369-C), this protein is UDP-N-acetylenolpyruvoylglucosamine reductase.